Consider the following 366-residue polypeptide: Protein RecA (366 aa).

77–84 is a binding site for ATP; that stretch reads GPESSGKT. The tract at residues 346–366 is disordered; sequence IGGPGGEDDDAGGAAGVGDEA.

The protein belongs to the RecA family.

It localises to the cytoplasm. In terms of biological role, can catalyze the hydrolysis of ATP in the presence of single-stranded DNA, the ATP-dependent uptake of single-stranded DNA by duplex DNA, and the ATP-dependent hybridization of homologous single-stranded DNAs. It interacts with LexA causing its activation and leading to its autocatalytic cleavage. The polypeptide is Protein RecA (Rhodospirillum rubrum (strain ATCC 11170 / ATH 1.1.1 / DSM 467 / LMG 4362 / NCIMB 8255 / S1)).